The following is a 290-amino-acid chain: RWD domain-containing protein 2B (290 aa).

Positions 12–136 (SELDLLASMF…EWVKEHAFDY (125 aa)) constitute an RWD domain.

This Mus musculus (Mouse) protein is RWD domain-containing protein 2B (Rwdd2b).